Consider the following 339-residue polypeptide: Cathepsin L-like peptidase (339 aa).

The signal sequence occupies residues 1-16 (MKILILLVAFVAAANA). The propeptide at 17-121 (VSLYELVKEE…VTFIEPANVE (105 aa)) is activation peptide. An N-linked (GlcNAc...) asparagine glycan is attached at N95. Intrachain disulfides connect C143–C186, C177–C219, and C278–C328. The active site involves C146. Active-site residues include H285 and N306.

The protein belongs to the peptidase C1 family. In terms of assembly, dimer of a heavy and a light chain linked by disulfide bonds. Interacts with cystatin; the interaction results in inhibition of cathepsin L-like peptidase activity. In terms of tissue distribution, salivary gland. Midgut.

It catalyses the reaction Specificity close to that of papain. As compared to cathepsin B, cathepsin L exhibits higher activity toward protein substrates, but has little activity on Z-Arg-Arg-NHMec, and no peptidyl-dipeptidase activity.. Its activity is regulated as follows. More active in the presence of a reducing agent DTT. Functionally, proteinase exhibiting preference for Leu, Val and Phe residues at the P2 position. The sequence is that of Cathepsin L-like peptidase from Aedes aegypti (Yellowfever mosquito).